Reading from the N-terminus, the 210-residue chain is Thymidylate kinase (210 aa).

Residue 10–17 (GPEGAGKS) coordinates ATP.

Belongs to the thymidylate kinase family.

It catalyses the reaction dTMP + ATP = dTDP + ADP. In terms of biological role, phosphorylation of dTMP to form dTDP in both de novo and salvage pathways of dTTP synthesis. In Pseudomonas aeruginosa (strain UCBPP-PA14), this protein is Thymidylate kinase.